The following is a 256-amino-acid chain: Thiazole synthase (256 aa).

The Schiff-base intermediate with DXP role is filled by K96. 1-deoxy-D-xylulose 5-phosphate-binding positions include G157, 184–185, and 206–207; these read AG and NT.

This sequence belongs to the ThiG family. In terms of assembly, homotetramer. Forms heterodimers with either ThiH or ThiS.

It localises to the cytoplasm. It carries out the reaction [ThiS sulfur-carrier protein]-C-terminal-Gly-aminoethanethioate + 2-iminoacetate + 1-deoxy-D-xylulose 5-phosphate = [ThiS sulfur-carrier protein]-C-terminal Gly-Gly + 2-[(2R,5Z)-2-carboxy-4-methylthiazol-5(2H)-ylidene]ethyl phosphate + 2 H2O + H(+). It participates in cofactor biosynthesis; thiamine diphosphate biosynthesis. In terms of biological role, catalyzes the rearrangement of 1-deoxy-D-xylulose 5-phosphate (DXP) to produce the thiazole phosphate moiety of thiamine. Sulfur is provided by the thiocarboxylate moiety of the carrier protein ThiS. In vitro, sulfur can be provided by H(2)S. The sequence is that of Thiazole synthase from Brucella melitensis biotype 2 (strain ATCC 23457).